Consider the following 695-residue polypeptide: Protein MALE DISCOVERER 1 (695 aa).

The N-terminal stretch at 1–29 (MGCRWNPIGFQFSCFMFLIITLQSRSSLS) is a signal peptide. Over 30–340 (LESEGFVLLK…SKGFKDVWLY (311 aa)) the chain is Extracellular. Asn-56 and Asn-80 each carry an N-linked (GlcNAc...) asparagine glycan. 4 LRR repeats span residues 75 to 98 (KVQMLNLSGCSLGGTLAPELSQLS), 99 to 121 (ELRSLILSKNKLSGDIPNEFASF), 123 to 144 (KLEFLDLRDNNLNGVVPPELNK), and 147 to 168 (TPENLLLSGNKFAGFMTVKFLR). Residue Asn-247 is glycosylated (N-linked (GlcNAc...) asparagine). The disordered stretch occupies residues 302-325 (PPLIPPSSPPPLPTNNTIASDPPR). The span at 303–314 (PLIPPSSPPPLP) shows a compositional bias: pro residues. Asn-316 carries N-linked (GlcNAc...) asparagine glycosylation. Residues 341-361 (VVIGVAAFVAMLIIVAVIFFF) traverse the membrane as a helical segment. Residues 362–695 (RKRAVKSIGP…ELEILSSEAT (334 aa)) are Cytoplasmic-facing. Positions 363–668 (KRAVKSIGPW…YVVQQLKEVI (306 aa)) constitute a Protein kinase domain. A Phosphoserine modification is found at Ser-652.

It belongs to the protein kinase superfamily. Ser/Thr protein kinase family. In terms of assembly, homodimer. Interacts with MIK1, MIK2 and LURE1.2. LURE1.2 enhances the heterodimerization of MDIS1 with MIK1 or MIK2. Post-translationally, phosphorylated by MIK1. As to expression, expressed in pollen tubes and seedlings.

The protein resides in the cell membrane. The protein localises to the endomembrane system. It carries out the reaction L-seryl-[protein] + ATP = O-phospho-L-seryl-[protein] + ADP + H(+). It catalyses the reaction L-threonyl-[protein] + ATP = O-phospho-L-threonyl-[protein] + ADP + H(+). In terms of biological role, involved in the pollen tube perception of the female signal. The chain is Protein MALE DISCOVERER 1 from Arabidopsis thaliana (Mouse-ear cress).